The chain runs to 461 residues: Squalene synthase BSS (461 aa).

NADP(+)-binding residues include Arg-51 and Arg-76. The Mg(2+) site is built by Asp-79, Glu-82, and Asp-83. Positions 219, 322, and 324 each coordinate NADP(+). The chain crosses the membrane as a helical span at residues 430 to 450 (VTQHWWSILIFLISIAVFFIP).

The protein belongs to the phytoene/squalene synthase family. Mg(2+) serves as cofactor.

The protein resides in the endoplasmic reticulum membrane. It catalyses the reaction 2 (2E,6E)-farnesyl diphosphate + NADPH + H(+) = squalene + 2 diphosphate + NADP(+). It carries out the reaction 2 (2E,6E)-farnesyl diphosphate + NADH + H(+) = squalene + 2 diphosphate + NAD(+). Functionally, converts farnesyl diphosphate (FPP) into squalene, a precursor for sterol biosynthesis in eukaryotes. Does not possess botryococcene synthase activity. The polypeptide is Squalene synthase BSS (Botryococcus braunii (Green alga)).